A 44-amino-acid polypeptide reads, in one-letter code: Peptide Hact-4 (44 aa).

3 disulfides stabilise this stretch: C8-C42, C15-C34, and C20-C43.

As to expression, expressed in tentacles.

The protein localises to the nematocyst. Its subcellular location is the secreted. Functionally, peptide with unknown function. Does not exhibit antimicrobial activity against Escherichia coli and Staphylococcus aureus. Does not exhibit any effect on human ion channel TRPV1 in a Xenopus laevis oocytes assay. The chain is Peptide Hact-4 from Heliofungia actiniformis (Mushroom coral).